A 515-amino-acid chain; its full sequence is MRNLNTELDFFVSFSALKEENISQLKVYWAQSNLVELYYGESFYINIVCSRPIVDENVTTWPENEGFRIEGTLLESLVESVTSASNYPKVNAFSLMCSGIPSFIWVEDDKQYALWACLAQLDSYSYPNHKLEIHVYKHILPDLPQSSEVDRNSETEGTREENSNTSDWDEQNEYVSEVEGDYNLLGSLSNDIQFRSNPPVISGAYVFGESDVANELKDPSRKTKTRKKVFECSVPVVLKLRSYALNESNQYITSIVSPDSSCENIRILGFKAETNAATISLFAPKTPEKLQITLSSSDVFTIIHLLQIPDNIKHIELQCFCKVIVAQKLSETLVESMPFTYKHPPVLITRRTPTKTHTKQLSSSGNVSAAQSISSLNLLEISASSPSYVPSGSSFSVRANLYNPLDFSIDLLIRIPLYCYDDCLTNKEHSTSKSEEKSSELLKYPNGHTISPGIIALSTKLYTGSIFPKCEKDFDLHFLAYKPGSYDLSSISIEDVNHVVHKPRKLSKELQIIVT.

Residues 146–171 (SSEVDRNSETEGTREENSNTSDWDEQ) form a disordered region. Basic and acidic residues predominate over residues 148 to 162 (EVDRNSETEGTREEN).

The protein localises to the cytoplasm. It is found in the nucleus. This is an uncharacterized protein from Schizosaccharomyces pombe (strain 972 / ATCC 24843) (Fission yeast).